The sequence spans 59 residues: Temporin-CDYe (59 aa).

The first 22 residues, 1–22, serve as a signal peptide directing secretion; it reads MFTLKKSMLLLLFLGTISLTLC. Residues 23–42 constitute a propeptide that is removed on maturation; it reads EEERDANEEEENGGEVKVEE.

The protein belongs to the frog skin active peptide (FSAP) family. Temporin subfamily. Expressed by the skin glands.

The protein resides in the secreted. Its function is as follows. Antimicrobial peptide. In Rana dybowskii (Dybovsky's frog), this protein is Temporin-CDYe.